We begin with the raw amino-acid sequence, 172 residues long: MQNKPSSYDREDLLASSRGELFGPNGPQLPAPNMLMMDRIPLMSETEGAFGKGKVIAELDITPDLWFFDCHFPGDPVMPGCLGLDAMWQLVGFFLGWIGGEGKGRALGVGEVKFTGQVLPTAKKVTYEIDFKRVINRKLVMGLADGRVLVDGKEIYVAKDLKVGLFQDTSAF.

Residue H71 is part of the active site.

It belongs to the thioester dehydratase family. FabA subfamily. Homodimer.

The protein resides in the cytoplasm. The enzyme catalyses a (3R)-hydroxyacyl-[ACP] = a (2E)-enoyl-[ACP] + H2O. It catalyses the reaction (3R)-hydroxydecanoyl-[ACP] = (2E)-decenoyl-[ACP] + H2O. It carries out the reaction (2E)-decenoyl-[ACP] = (3Z)-decenoyl-[ACP]. Its pathway is lipid metabolism; fatty acid biosynthesis. Its function is as follows. Necessary for the introduction of cis unsaturation into fatty acids. Catalyzes the dehydration of (3R)-3-hydroxydecanoyl-ACP to E-(2)-decenoyl-ACP and then its isomerization to Z-(3)-decenoyl-ACP. Can catalyze the dehydratase reaction for beta-hydroxyacyl-ACPs with saturated chain lengths up to 16:0, being most active on intermediate chain length. This chain is 3-hydroxydecanoyl-[acyl-carrier-protein] dehydratase, found in Aliivibrio fischeri (strain ATCC 700601 / ES114) (Vibrio fischeri).